A 150-amino-acid polypeptide reads, in one-letter code: Putative HTH-type transcriptional regulator HI_0379 (150 aa).

The HTH rrf2-type domain occupies 2–131; sequence KLTSKGRYAV…NEITLAELVN (130 aa).

This chain is Putative HTH-type transcriptional regulator HI_0379, found in Haemophilus influenzae (strain ATCC 51907 / DSM 11121 / KW20 / Rd).